The following is a 362-amino-acid chain: Aminomethyltransferase (362 aa).

This sequence belongs to the GcvT family. As to quaternary structure, the glycine cleavage system is composed of four proteins: P, T, L and H.

The enzyme catalyses N(6)-[(R)-S(8)-aminomethyldihydrolipoyl]-L-lysyl-[protein] + (6S)-5,6,7,8-tetrahydrofolate = N(6)-[(R)-dihydrolipoyl]-L-lysyl-[protein] + (6R)-5,10-methylene-5,6,7,8-tetrahydrofolate + NH4(+). Its function is as follows. The glycine cleavage system catalyzes the degradation of glycine. This is Aminomethyltransferase from Chloroherpeton thalassium (strain ATCC 35110 / GB-78).